Consider the following 52-residue polypeptide: Large ribosomal subunit protein bL32c (52 aa).

It belongs to the bacterial ribosomal protein bL32 family.

It is found in the plastid. The protein resides in the chloroplast. The protein is Large ribosomal subunit protein bL32c of Morus indica (Mulberry).